The primary structure comprises 255 residues: Type III pantothenate kinase (255 aa).

Residue 6–13 participates in ATP binding; the sequence is DVGNTNTV. Substrate-binding positions include Y100 and 107 to 110; that span reads GADR. D109 functions as the Proton acceptor in the catalytic mechanism. Position 129 (D129) interacts with K(+). Position 132 (T132) interacts with ATP. T184 serves as a coordination point for substrate.

The protein belongs to the type III pantothenate kinase family. As to quaternary structure, homodimer. Requires NH4(+) as cofactor. The cofactor is K(+).

It is found in the cytoplasm. The catalysed reaction is (R)-pantothenate + ATP = (R)-4'-phosphopantothenate + ADP + H(+). Its pathway is cofactor biosynthesis; coenzyme A biosynthesis; CoA from (R)-pantothenate: step 1/5. In terms of biological role, catalyzes the phosphorylation of pantothenate (Pan), the first step in CoA biosynthesis. This Acetivibrio thermocellus (strain ATCC 27405 / DSM 1237 / JCM 9322 / NBRC 103400 / NCIMB 10682 / NRRL B-4536 / VPI 7372) (Clostridium thermocellum) protein is Type III pantothenate kinase.